The sequence spans 595 residues: Arginine--tRNA ligase (595 aa).

The short motif at 132–142 (ANPTGPLHVGH) is the 'HIGH' region element.

This sequence belongs to the class-I aminoacyl-tRNA synthetase family. Monomer.

It localises to the cytoplasm. It catalyses the reaction tRNA(Arg) + L-arginine + ATP = L-arginyl-tRNA(Arg) + AMP + diphosphate. This Cupriavidus taiwanensis (strain DSM 17343 / BCRC 17206 / CCUG 44338 / CIP 107171 / LMG 19424 / R1) (Ralstonia taiwanensis (strain LMG 19424)) protein is Arginine--tRNA ligase.